The chain runs to 104 residues: uncharacterized protein (104 aa).

The protein to M.jannaschii MJ1511.

This is an uncharacterized protein from Methanocaldococcus jannaschii (strain ATCC 43067 / DSM 2661 / JAL-1 / JCM 10045 / NBRC 100440) (Methanococcus jannaschii).